We begin with the raw amino-acid sequence, 55 residues long: Small ribosomal subunit protein bS21 (55 aa).

The protein belongs to the bacterial ribosomal protein bS21 family.

The polypeptide is Small ribosomal subunit protein bS21 (Ureaplasma parvum serovar 3 (strain ATCC 27815 / 27 / NCTC 11736)).